Reading from the N-terminus, the 530-residue chain is UPF0422 protein lpl2888 (530 aa).

The first 19 residues, 1–19 (MKFKKIILALACLSSPLYA), serve as a signal peptide directing secretion. Residues 20–66 (DQDQQLKSEIQRLQHQAEDLQAQLNRLQKQLANHKSSQQKHEQQAAT) adopt a coiled-coil conformation. Residues 50 to 81 (LANHKSSQQKHEQQAATKPAEPQSKPTVKSGA) form a disordered region.

This sequence belongs to the UPF0422 family.

In Legionella pneumophila (strain Lens), this protein is UPF0422 protein lpl2888.